The sequence spans 184 residues: Inosine triphosphate pyrophosphatase (184 aa).

9 to 14 (TSNASK) is an ITP binding site. Glutamate 38 lines the Mg(2+) pocket. ITP-binding positions include lysine 50, 66–67 (DT), lysine 83, 142–145 (FGWD), lysine 163, and 168–169 (HR).

Belongs to the HAM1 NTPase family. In terms of assembly, homodimer. The cofactor is Mg(2+). It depends on Mn(2+) as a cofactor.

It localises to the cytoplasm. It is found in the nucleus. It catalyses the reaction ITP + H2O = IMP + diphosphate + H(+). The catalysed reaction is dITP + H2O = dIMP + diphosphate + H(+). It carries out the reaction XTP + H2O = XMP + diphosphate + H(+). Functionally, pyrophosphatase that hydrolyzes non-canonical purine nucleotides such as inosine triphosphate (ITP), deoxyinosine triphosphate (dITP) or xanthosine 5'-triphosphate (XTP) to their respective monophosphate derivatives. The enzyme does not distinguish between the deoxy- and ribose forms. Probably excludes non-canonical purines from RNA and DNA precursor pools, thus preventing their incorporation into RNA and DNA and avoiding chromosomal lesions. The sequence is that of Inosine triphosphate pyrophosphatase from Tuber melanosporum (strain Mel28) (Perigord black truffle).